Here is a 214-residue protein sequence, read N- to C-terminus: Adenylate kinase (214 aa).

10–15 (GAGKGT) contacts ATP. The NMP stretch occupies residues 30-59 (STGDMLRAAIKAGTELGKQAKAVIDAGQLV). AMP is bound by residues Thr-31, Arg-36, 57 to 59 (QLV), 85 to 88 (GFPR), and Gln-92. The interval 122-159 (GRRAHLPSGRTYHVVYNPPKVEGKDDVTGEDLVVRDDD) is LID. Residues Arg-123 and 132–133 (TY) contribute to the ATP site. AMP is bound by residues Arg-156 and Arg-167. An ATP-binding site is contributed by Lys-200.

It belongs to the adenylate kinase family. As to quaternary structure, monomer.

Its subcellular location is the cytoplasm. It catalyses the reaction AMP + ATP = 2 ADP. Its pathway is purine metabolism; AMP biosynthesis via salvage pathway; AMP from ADP: step 1/1. Functionally, catalyzes the reversible transfer of the terminal phosphate group between ATP and AMP. Plays an important role in cellular energy homeostasis and in adenine nucleotide metabolism. The protein is Adenylate kinase of Vibrio vulnificus (strain CMCP6).